Consider the following 405-residue polypeptide: Probable tRNA sulfurtransferase (405 aa).

The region spanning 60–165 (TAVMDRLKGV…LNGVFLSGQT (106 aa)) is the THUMP domain. ATP contacts are provided by residues 183 to 184 (ML), 208 to 209 (HF), arginine 265, glycine 287, and glutamine 296.

The protein belongs to the ThiI family.

It is found in the cytoplasm. It carries out the reaction [ThiI sulfur-carrier protein]-S-sulfanyl-L-cysteine + a uridine in tRNA + 2 reduced [2Fe-2S]-[ferredoxin] + ATP + H(+) = [ThiI sulfur-carrier protein]-L-cysteine + a 4-thiouridine in tRNA + 2 oxidized [2Fe-2S]-[ferredoxin] + AMP + diphosphate. The catalysed reaction is [ThiS sulfur-carrier protein]-C-terminal Gly-Gly-AMP + S-sulfanyl-L-cysteinyl-[cysteine desulfurase] + AH2 = [ThiS sulfur-carrier protein]-C-terminal-Gly-aminoethanethioate + L-cysteinyl-[cysteine desulfurase] + A + AMP + 2 H(+). It functions in the pathway cofactor biosynthesis; thiamine diphosphate biosynthesis. Its function is as follows. Catalyzes the ATP-dependent transfer of a sulfur to tRNA to produce 4-thiouridine in position 8 of tRNAs, which functions as a near-UV photosensor. Also catalyzes the transfer of sulfur to the sulfur carrier protein ThiS, forming ThiS-thiocarboxylate. This is a step in the synthesis of thiazole, in the thiamine biosynthesis pathway. The sulfur is donated as persulfide by IscS. In Levilactobacillus brevis (strain ATCC 367 / BCRC 12310 / CIP 105137 / JCM 1170 / LMG 11437 / NCIMB 947 / NCTC 947) (Lactobacillus brevis), this protein is Probable tRNA sulfurtransferase.